The following is a 186-amino-acid chain: ATP synthase subunit delta (186 aa).

Belongs to the ATPase delta chain family. In terms of assembly, F-type ATPases have 2 components, F(1) - the catalytic core - and F(0) - the membrane proton channel. F(1) has five subunits: alpha(3), beta(3), gamma(1), delta(1), epsilon(1). F(0) has three main subunits: a(1), b(2) and c(10-14). The alpha and beta chains form an alternating ring which encloses part of the gamma chain. F(1) is attached to F(0) by a central stalk formed by the gamma and epsilon chains, while a peripheral stalk is formed by the delta and b chains.

It is found in the cell inner membrane. In terms of biological role, f(1)F(0) ATP synthase produces ATP from ADP in the presence of a proton or sodium gradient. F-type ATPases consist of two structural domains, F(1) containing the extramembraneous catalytic core and F(0) containing the membrane proton channel, linked together by a central stalk and a peripheral stalk. During catalysis, ATP synthesis in the catalytic domain of F(1) is coupled via a rotary mechanism of the central stalk subunits to proton translocation. Functionally, this protein is part of the stalk that links CF(0) to CF(1). It either transmits conformational changes from CF(0) to CF(1) or is implicated in proton conduction. This is ATP synthase subunit delta from Bacteroides fragilis (strain ATCC 25285 / DSM 2151 / CCUG 4856 / JCM 11019 / LMG 10263 / NCTC 9343 / Onslow / VPI 2553 / EN-2).